Here is a 148-residue protein sequence, read N- to C-terminus: Small ribosomal subunit protein eS19 (148 aa).

A compositionally biased stretch (basic residues) spans 79–90 (HGSTKNRGSRPA). Disordered stretches follow at residues 79–98 (HGST…ASGA) and 116–148 (DEEK…EDDE). The span at 130-140 (RDLDRIAKTTV) shows a compositional bias: basic and acidic residues.

It belongs to the eukaryotic ribosomal protein eS19 family.

The polypeptide is Small ribosomal subunit protein eS19 (rps19) (Emericella nidulans (strain FGSC A4 / ATCC 38163 / CBS 112.46 / NRRL 194 / M139) (Aspergillus nidulans)).